We begin with the raw amino-acid sequence, 1481 residues long: Cystic fibrosis transmembrane conductance regulator (1481 aa).

Residues 1–77 lie on the Cytoplasmic side of the membrane; it reads MQRSPLEKAS…KLINALRRCF (77 aa). A helical membrane pass occupies residues 78-98; that stretch reads FWRFTFYGILLYLGEVTKAVQ. One can recognise an ABC transmembrane type-1 1 domain in the interval 81–365; that stretch reads FTFYGILLYL…WAVQTWYDSL (285 aa). The Extracellular portion of the chain corresponds to 99–122; the sequence is PLLLGRIIASYDPDNKTERSIAIY. A helical transmembrane segment spans residues 123 to 146; that stretch reads LGIGLCLLFIVRTLLLHPAIFGLH. The Cytoplasmic segment spans residues 147 to 195; the sequence is HIGMQMRIAMFSLIYKKTLKLSSRVLDKISIGQLVSLLSNNLNKFDEGL. A helical transmembrane segment spans residues 196-216; the sequence is ALAHFVWIAPLQVALLMGLIW. At 217-222 the chain is on the extracellular side; it reads ELLQAS. The chain crosses the membrane as a helical span at residues 223–243; that stretch reads AFCGLGFLIVLALFQAGLGRM. The Cytoplasmic portion of the chain corresponds to 244–298; that stretch reads MMKYRDQRAGKINERLVITSEMIENIQSVKAYCWEEAMEKMIENLRQTELKLTRK. A helical transmembrane segment spans residues 299-319; it reads AAYVRYFNSSAFFFSGFFVVF. Over 320-339 the chain is Extracellular; the sequence is LSVLPYALIKGIALRKIFTT. A helical transmembrane segment spans residues 340–358; it reads ISFCIVLRMAVTRQFPWAV. Residues 359–858 lie on the Cytoplasmic side of the membrane; sequence QTWYDSLGAI…YLRYITLHKS (500 aa). ATP contacts are provided by residues tryptophan 401, serine 434, 458–465, and glutamine 493; that span reads GSTGAGKT. One can recognise an ABC transporter 1 domain in the interval 423–646; that stretch reads NGDDNLFFSN…RPDFSSKLMG (224 aa). Cysteine 524 carries S-palmitoyl cysteine lipidation. 2 positions are modified to phosphoserine: serine 549 and serine 660. Residues 654 to 831 are disordered R region; the sequence is SSERRNSILT…EEINEEDLKE (178 aa). Serine 670 is modified (phosphoserine; by PKA). Serine 686 carries the post-translational modification Phosphoserine. Lysine 688 participates in a covalent cross-link: Glycyl lysine isopeptide (Lys-Gly) (interchain with G-Cter in ubiquitin). 2 positions are modified to phosphoserine: serine 700 and serine 712. Position 717 is a phosphothreonine (threonine 717). 6 positions are modified to phosphoserine: serine 737, serine 753, serine 768, serine 790, serine 795, and serine 813. The helical transmembrane segment at 859-879 threads the bilayer; that stretch reads LIFVLIWCLVIFLAEVAASLV. The ABC transmembrane type-1 2 domain occupies 859–1155; sequence LIFVLIWCLV…AVNSSIDVDS (297 aa). Over 880–918 the chain is Extracellular; sequence LLWLLGNTRFQDKGNSTYSRNNSYAVIITNTSSYYVFYI. Residues asparagine 894, asparagine 900, and asparagine 909 are each glycosylated (N-linked (GlcNAc...) asparagine). The chain crosses the membrane as a discontinuously helical span at residues 919–939; it reads YVGVADTLLALGFFRGLPLVH. Topologically, residues 940–990 are cytoplasmic; the sequence is TLITVSKILHHKMLHSVLQAPMSTLNTLKAGGILNRFSKDIAILDDLLPLT. Residues 991 to 1011 traverse the membrane as a helical segment; the sequence is IFDFIQLLLIVIGAIAVVSVL. The Extracellular portion of the chain corresponds to 1012–1013; it reads QP. A helical membrane pass occupies residues 1014–1034; it reads YIFLATVPVIAAFILLRAYFL. At 1035 to 1095 the chain is on the cytoplasmic side; that stretch reads QTSQQLKQLE…TASWFLYLST (61 aa). The helical transmembrane segment at 1096-1116 threads the bilayer; that stretch reads LRWFQMRIEMIFVIFFIAVTF. Over 1117 to 1130 the chain is Extracellular; it reads ISILTTGEGEGTVG. A helical transmembrane segment spans residues 1131–1151; it reads IILTLAMNIMSTLQWAVNSSI. The Cytoplasmic segment spans residues 1152 to 1481; sequence DVDSLMRSVS…TEEEVQETRL (330 aa). One can recognise an ABC transporter 2 domain in the interval 1211–1444; sequence MTIKDLTAKY…KSLFRQAISH (234 aa). Residues tyrosine 1220 and 1245–1252 contribute to the ATP site; that span reads GRTGSGKS. Residues 1387–1481 form an interaction with GORASP2 region; sequence RALKQAFADC…TEEEVQETRL (95 aa). A lipid anchor (S-palmitoyl cysteine) is attached at cysteine 1396. Phosphoserine occurs at positions 1445 and 1457. A disordered region spans residues 1453-1481; the sequence is HRNSSKYKSRPQIASLKEETEEEVQETRL. Over residues 1471 to 1481 the composition is skewed to acidic residues; that stretch reads ETEEEVQETRL. The short motif at 1479-1481 is the PDZ-binding element; sequence TRL.

The protein belongs to the ABC transporter superfamily. ABCC family. CFTR transporter (TC 3.A.1.202) subfamily. Monomer; does not require oligomerization for channel activity. May form oligomers in the membrane. Interacts with SLC26A3, SLC26A6 and NHERF1. Interacts with SHANK2. Interacts with MYO6. Interacts (via C-terminus) with GOPC (via PDZ domain); this promotes CFTR internalization and thereby decreases channel activity. Interacts with SLC4A7 through NHERF1. Found in a complex with MYO5B and RAB11A. Interacts with ANO1. Interacts with SLC26A8. Interacts with AHCYL1; the interaction increases CFTR activity. Interacts with CSE1L. The core-glycosylated form interacts with GORASP2 (via PDZ GRASP-type 1 domain) in respone to ER stress. Interacts with MARCHF2; the interaction leads to CFTR ubiqtuitination and degradation. Interacts with ADGRG2. In terms of processing, N-glycosylated. Phosphorylated; cAMP treatment promotes phosphorylation and activates the channel. Dephosphorylation decreases the ATPase activity (in vitro). Phosphorylation at PKA sites activates the channel. Phosphorylation at PKC sites enhances the response to phosphorylation by PKA. Phosphorylated by AMPK; this inhibits channel activity. Post-translationally, ubiquitinated, leading to its degradation in the lysosome. Deubiquitination by USP10 in early endosomes enhances its endocytic recycling to the cell membrane. Ubiquitinated by RNF185 during ER stress. Ubiquitinated by MARCHF2.

The protein localises to the apical cell membrane. It localises to the early endosome membrane. The protein resides in the cell membrane. It is found in the recycling endosome membrane. Its subcellular location is the endoplasmic reticulum membrane. The protein localises to the nucleus. The catalysed reaction is ATP + H2O + closed Cl(-) channel = ADP + phosphate + open Cl(-) channel.. The enzyme catalyses chloride(in) = chloride(out). It carries out the reaction hydrogencarbonate(in) = hydrogencarbonate(out). It catalyses the reaction ATP + H2O = ADP + phosphate + H(+). Epithelial ion channel that plays an important role in the regulation of epithelial ion and water transport and fluid homeostasis. Mediates the transport of chloride ions across the cell membrane. Possesses an intrinsic ATPase activity and utilizes ATP to gate its channel; the passive flow of anions through the channel is gated by cycles of ATP binding and hydrolysis by the ATP-binding domains. The ion channel is also permeable to HCO(3)(-); selectivity depends on the extracellular chloride concentration. Exerts its function also by modulating the activity of other ion channels and transporters. Contributes to the regulation of the pH and the ion content of the epithelial fluid layer. Modulates the activity of the epithelial sodium channel (ENaC) complex, in part by regulating the cell surface expression of the ENaC complex. May regulate bicarbonate secretion and salvage in epithelial cells by regulating the transporter SLC4A7. Can inhibit the chloride channel activity of ANO1. Plays a role in the chloride and bicarbonate homeostasis during sperm epididymal maturation and capacitation. The polypeptide is Cystic fibrosis transmembrane conductance regulator (Saimiri boliviensis boliviensis (Bolivian squirrel monkey)).